We begin with the raw amino-acid sequence, 333 residues long: 5-formaminoimidazole-4-carboxamide-1-(beta)-D-ribofuranosyl 5'-monophosphate synthetase (333 aa).

2 residues coordinate 5-amino-1-(5-phospho-beta-D-ribosyl)imidazole-4-carboxamide: histidine 10 and serine 74. Residues arginine 95–asparagine 324 enclose the ATP-grasp domain. ATP-binding positions include valine 125–tyrosine 185 and glutamate 207. Asparagine 230 contributes to the 5-amino-1-(5-phospho-beta-D-ribosyl)imidazole-4-carboxamide binding site. 2 residues coordinate Mg(2+): glutamate 269 and glutamate 282.

The protein belongs to the phosphohexose mutase family. Requires Mg(2+) as cofactor. The cofactor is Mn(2+).

The catalysed reaction is 5-amino-1-(5-phospho-beta-D-ribosyl)imidazole-4-carboxamide + formate + ATP = 5-formamido-1-(5-phospho-D-ribosyl)imidazole-4-carboxamide + ADP + phosphate. It functions in the pathway purine metabolism; IMP biosynthesis via de novo pathway; 5-formamido-1-(5-phospho-D-ribosyl)imidazole-4-carboxamide from 5-amino-1-(5-phospho-D-ribosyl)imidazole-4-carboxamide (formate route): step 1/1. Its function is as follows. Catalyzes the ATP- and formate-dependent formylation of 5-aminoimidazole-4-carboxamide-1-beta-d-ribofuranosyl 5'-monophosphate (AICAR) to 5-formaminoimidazole-4-carboxamide-1-beta-d-ribofuranosyl 5'-monophosphate (FAICAR) in the absence of folates. This chain is 5-formaminoimidazole-4-carboxamide-1-(beta)-D-ribofuranosyl 5'-monophosphate synthetase, found in Sulfolobus acidocaldarius (strain ATCC 33909 / DSM 639 / JCM 8929 / NBRC 15157 / NCIMB 11770).